A 230-amino-acid polypeptide reads, in one-letter code: Sodium channel modifier 1 (230 aa).

S2 bears the Phosphoserine mark. Residues 4 to 20 (KREGDDWSQLNVLKKRR) carry the Bipartite nuclear localization signal motif. The Matrin-type zinc finger occupies 42 to 74 (FACAICPHRPVLDTLAMLTAHRAGKKHLSSLQL). A Glycyl lysine isopeptide (Lys-Gly) (interchain with G-Cter in SUMO2) cross-link involves residue K67. Disordered stretches follow at residues 76 to 106 (YGKK…EAPL), 129 to 186 (RRKY…SPTR), and 200 to 230 (GWIP…LPLD). Positions 81-102 (PGKERKQNPKHQNELRREETKA) are enriched in basic and acidic residues. S144 bears the Phosphoserine mark. Positions 164-174 (PAAGPQAEESA) are enriched in low complexity. Residue S183 is modified to Phosphoserine. The interval 188–230 (RALDHYLTLRSSGWIPDGRGRWVKDENVEFDSDEEEPPDLPLD) is required for interaction with LUC7L2. Positions 205–214 (GRGRWVKDEN) are enriched in basic and acidic residues. Over residues 215-230 (VEFDSDEEEPPDLPLD) the composition is skewed to acidic residues. Residue S219 is modified to Phosphoserine.

In terms of assembly, component of the minor spliceosome, which splices U12-type introns. Within this complex, interacts with RNF113A, as well as with SF3B1/SF3b155, SF3B2/SF3b145, SF3B3/SF3b130 and CDC5L. May interact with LUC7L2 and SNRNP70.

The protein localises to the nucleus. Its subcellular location is the nucleoplasm. The protein resides in the nucleus speckle. In terms of biological role, as a component of the minor spliceosome, involved in the splicing of U12-type introns in pre-mRNAs. Plays a role in the regulation of primary cilia length and Hedgehog signaling. The chain is Sodium channel modifier 1 (SCNM1) from Homo sapiens (Human).